We begin with the raw amino-acid sequence, 124 residues long: Aspartate 1-decarboxylase (124 aa).

The active-site Schiff-base intermediate with substrate; via pyruvic acid is the Ser25. Ser25 is subject to Pyruvic acid (Ser). Thr57 provides a ligand contact to substrate. Tyr58 (proton donor) is an active-site residue. 73–75 provides a ligand contact to substrate; that stretch reads GAA.

Belongs to the PanD family. In terms of assembly, heterooctamer of four alpha and four beta subunits. Pyruvate serves as cofactor. In terms of processing, is synthesized initially as an inactive proenzyme, which is activated by self-cleavage at a specific serine bond to produce a beta-subunit with a hydroxyl group at its C-terminus and an alpha-subunit with a pyruvoyl group at its N-terminus.

Its subcellular location is the cytoplasm. It carries out the reaction L-aspartate + H(+) = beta-alanine + CO2. Its pathway is cofactor biosynthesis; (R)-pantothenate biosynthesis; beta-alanine from L-aspartate: step 1/1. Catalyzes the pyruvoyl-dependent decarboxylation of aspartate to produce beta-alanine. The chain is Aspartate 1-decarboxylase from Syntrophobacter fumaroxidans (strain DSM 10017 / MPOB).